We begin with the raw amino-acid sequence, 429 residues long: Protein cereblon (429 aa).

A disordered region spans residues 1–30; that stretch reads MGNHLPLLPAESEEEDEMEVEDQDSKEAKK. A compositionally biased stretch (acidic residues) spans 11 to 22; sequence ESEEEDEMEVED. Residue S12 is modified to Phosphoserine. A Lon N-terminal domain is found at 68–306; sequence IPVLPQVMMI…CELDIMNKCT (239 aa). One can recognise a CULT domain in the interval 305–413; sequence CTSLCCKQCQ…LTRSALLPTI (109 aa). The Zn(2+) site is built by C310 and C313. Residues H365, W367, and W373 each coordinate (S)-thalidomide. Zn(2+)-binding residues include C378 and C381.

This sequence belongs to the CRBN family. Component of a DCX (DDB1-CUL4-X-box) protein ligase complex, at least composed of CRBN, CUL4A, DDB1 and RBX1. Interacts directly with DDB1. Interacts with KCNT1. Interacts with ILF2. Interacts with TRAF6 and ECSIT. In terms of processing, ubiquitinated, ubiquitination is mediated by its own DCX protein ligase complex.

It is found in the cytoplasm. The protein localises to the nucleus. Its subcellular location is the membrane. It participates in protein modification; protein ubiquitination. Its function is as follows. Substrate recognition component of a DCX (DDB1-CUL4-X-box) E3 protein ligase complex that mediates the ubiquitination and subsequent proteasomal degradation of target proteins, such as MEIS2, ILF2 or GLUL. Normal degradation of key regulatory proteins is required for normal limb outgrowth and expression of the fibroblast growth factor FGF8. Maintains presynaptic glutamate release and consequently cognitive functions, such as memory and learning, by negatively regulating large-conductance calcium-activated potassium (BK) channels in excitatory neurons. Likely to function by regulating the assembly and neuronal surface expression of BK channels via its interaction with KCNT1. May also be involved in regulating anxiety-like behaviors via a BK channel-independent mechanism. Plays a negative role in TLR4 signaling by interacting with TRAF6 and ECSIT, leading to inhibition of ECSIT ubiquitination, an important step of the signaling. This is Protein cereblon (CRBN) from Pongo abelii (Sumatran orangutan).